The following is a 435-amino-acid chain: AP-2 complex subunit mu (435 aa).

The MHD domain maps to 170-434; sequence RNELFLDVLE…IGRSGIYETR (265 aa). Lys341, Lys345, and Lys354 together coordinate a 1,2-diacyl-sn-glycero-3-phospho-(1D-myo-inositol-3,4,5-trisphosphate).

This sequence belongs to the adaptor complexes medium subunit family. As to quaternary structure, adaptor protein complex 2 (AP-2) is a heterotetramer composed of two large adaptins (alpha-type subunit and beta-type subunit), a medium adaptin (mu-type subunit) and a small adaptin (sigma-type subunit).

It localises to the cell membrane. The protein resides in the membrane. Its subcellular location is the coated pit. Component of the adaptor complexes which link clathrin to receptors in coated vesicles. Clathrin-associated protein complexes are believed to interact with the cytoplasmic tails of membrane proteins, leading to their selection and concentration. AP50 is a subunit of the plasma membrane adaptor. The complex binds polyphosphoinositide-containing lipids. This is AP-2 complex subunit mu (ap2m1) from Xenopus laevis (African clawed frog).